An 87-amino-acid polypeptide reads, in one-letter code: Small ribosomal subunit protein bS20 (87 aa).

The span at 1-11 shows a compositional bias: basic residues; sequence MANIKSAKKRA. A disordered region spans residues 1-27; sequence MANIKSAKKRAVQSEKRRQHNASQRSM.

This sequence belongs to the bacterial ribosomal protein bS20 family.

Functionally, binds directly to 16S ribosomal RNA. This chain is Small ribosomal subunit protein bS20, found in Actinobacillus succinogenes (strain ATCC 55618 / DSM 22257 / CCUG 43843 / 130Z).